Reading from the N-terminus, the 77-residue chain is MFHQAKSPTHSTLTNFLRTALILFPLFCGEYILTSGSMSNRTASSDKHPSIKPSAISNFARISPSSTRRRRAMARFE.

The interval 58–77 (NFARISPSSTRRRRAMARFE) is disordered. Positions 67–77 (TRRRRAMARFE) are enriched in basic residues.

This Acyrthosiphon pisum secondary endosymbiont phage 1 (Bacteriophage APSE-1) protein is Putative protein p6 (6).